Reading from the N-terminus, the 573-residue chain is Zinc finger protein 10 (573 aa).

In terms of domain architecture, KRAB spans 14–85 (VTFKDVFVDF…EREIHQETHP (72 aa)). Residues 206-232 (DSCASNSNECGQTFCQNIHLIQFARTH) form a C2H2-type 1; atypical zinc finger. C2H2-type zinc fingers lie at residues 265 to 287 (YECK…QLIH), 293 to 315 (YECK…QKTH), 321 to 343 (YECK…QRTH), 349 to 371 (YTCN…QRTH), 377 to 399 (YECP…QRTH), 405 to 427 (YECN…HRIH), 433 to 455 (FECK…QRTH), 461 to 483 (YECH…QRIH), and 489 to 511 (YECC…QRIH). The C2H2-type 11; atypical zinc finger occupies 517-539 (YKCNQCGIIFSQNSPFIVHQIAH).

It belongs to the krueppel C2H2-type zinc-finger protein family. As to quaternary structure, interacts (via the KRAB domain) with TRIM28 (via the RBCC domain).

The protein resides in the nucleus. May be involved in transcriptional regulation. The polypeptide is Zinc finger protein 10 (ZNF10) (Homo sapiens (Human)).